Consider the following 564-residue polypeptide: Eukaryotic translation initiation factor 3 subunit L (564 aa).

Residue S2 is modified to N-acetylserine. S21 is modified (phosphoserine). The region spanning 331–537 (DAIRVFANIL…IHIADTKVAR (207 aa)) is the PCI domain. N6-acetyllysine occurs at positions 465 and 549.

Belongs to the eIF-3 subunit L family. Component of the eukaryotic translation initiation factor 3 (eIF-3) complex, which is composed of 13 subunits: EIF3A, EIF3B, EIF3C, EIF3D, EIF3E, EIF3F, EIF3G, EIF3H, EIF3I, EIF3J, EIF3K, EIF3L and EIF3M. The eIF-3 complex appears to include 3 stable modules: module A is composed of EIF3A, EIF3B, EIF3G and EIF3I; module B is composed of EIF3F, EIF3H, and EIF3M; and module C is composed of EIF3C, EIF3D, EIF3E, EIF3K and EIF3L. EIF3C of module C binds EIF3B of module A and EIF3H of module B, thereby linking the three modules. EIF3J is a labile subunit that binds to the eIF-3 complex via EIF3B. The eIF-3 complex interacts with RPS6KB1 under conditions of nutrient depletion. Mitogenic stimulation leads to binding and activation of a complex composed of MTOR and RPTOR, leading to phosphorylation and release of RPS6KB1 and binding of EIF4B to eIF-3. Interacts with RRN3.

It is found in the cytoplasm. Component of the eukaryotic translation initiation factor 3 (eIF-3) complex, which is required for several steps in the initiation of protein synthesis. The eIF-3 complex associates with the 40S ribosome and facilitates the recruitment of eIF-1, eIF-1A, eIF-2:GTP:methionyl-tRNAi and eIF-5 to form the 43S pre-initiation complex (43S PIC). The eIF-3 complex stimulates mRNA recruitment to the 43S PIC and scanning of the mRNA for AUG recognition. The eIF-3 complex is also required for disassembly and recycling of post-termination ribosomal complexes and subsequently prevents premature joining of the 40S and 60S ribosomal subunits prior to initiation. The eIF-3 complex specifically targets and initiates translation of a subset of mRNAs involved in cell proliferation, including cell cycling, differentiation and apoptosis, and uses different modes of RNA stem-loop binding to exert either translational activation or repression. The sequence is that of Eukaryotic translation initiation factor 3 subunit L from Pan troglodytes (Chimpanzee).